A 102-amino-acid polypeptide reads, in one-letter code: 10 kDa heat shock protein, mitochondrial (102 aa).

The protein belongs to the GroES chaperonin family. Homohexamer.

The protein localises to the mitochondrion matrix. Its function is as follows. Eukaryotic CPN10 homolog which is essential for mitochondrial protein biogenesis, together with CPN60. Binds to CPN60 in the presence of Mg-ATP and suppresses the ATPase activity of the latter. The polypeptide is 10 kDa heat shock protein, mitochondrial (Schistosoma japonicum (Blood fluke)).